The following is a 521-amino-acid chain: Methionine--tRNA ligase (521 aa).

Positions Y14–H24 match the 'HIGH' region motif. Zn(2+) contacts are provided by C129, C132, C151, and H155. Positions K306–S310 match the 'KMSKS' region motif. ATP is bound at residue K309.

Belongs to the class-I aminoacyl-tRNA synthetase family. MetG type 2A subfamily. In terms of assembly, monomer. The cofactor is Zn(2+).

Its subcellular location is the cytoplasm. The enzyme catalyses tRNA(Met) + L-methionine + ATP = L-methionyl-tRNA(Met) + AMP + diphosphate. Functionally, is required not only for elongation of protein synthesis but also for the initiation of all mRNA translation through initiator tRNA(fMet) aminoacylation. The protein is Methionine--tRNA ligase of Ureaplasma parvum serovar 3 (strain ATCC 700970).